The chain runs to 842 residues: Elongation factor 2 (842 aa).

Residues 17-253 form the tr-type G domain; sequence TNVRNMSVIA…LWGDSYFNPK (237 aa). Residues 26-33, 158-161, and 213-215 each bind GTP; these read AHVDHGKS, NKVD, and SGL. A Diphthamide modification is found at His-699.

This sequence belongs to the TRAFAC class translation factor GTPase superfamily. Classic translation factor GTPase family. EF-G/EF-2 subfamily.

Its subcellular location is the cytoplasm. The catalysed reaction is GTP + H2O = GDP + phosphate + H(+). Catalyzes the GTP-dependent ribosomal translocation step during translation elongation. During this step, the ribosome changes from the pre-translocational (PRE) to the post-translocational (POST) state as the newly formed A-site-bound peptidyl-tRNA and P-site-bound deacylated tRNA move to the P and E sites, respectively. Catalyzes the coordinated movement of the two tRNA molecules, the mRNA and conformational changes in the ribosome. The polypeptide is Elongation factor 2 (EFT1) (Kluyveromyces lactis (strain ATCC 8585 / CBS 2359 / DSM 70799 / NBRC 1267 / NRRL Y-1140 / WM37) (Yeast)).